The chain runs to 207 residues: Peptidyl-tRNA hydrolase (207 aa).

Y19 lines the tRNA pocket. The active-site Proton acceptor is H24. Residues F70, N72, and N118 each contribute to the tRNA site.

The protein belongs to the PTH family. As to quaternary structure, monomer.

It is found in the cytoplasm. It catalyses the reaction an N-acyl-L-alpha-aminoacyl-tRNA + H2O = an N-acyl-L-amino acid + a tRNA + H(+). Its function is as follows. Hydrolyzes ribosome-free peptidyl-tRNAs (with 1 or more amino acids incorporated), which drop off the ribosome during protein synthesis, or as a result of ribosome stalling. Catalyzes the release of premature peptidyl moieties from peptidyl-tRNA molecules trapped in stalled 50S ribosomal subunits, and thus maintains levels of free tRNAs and 50S ribosomes. In Synechococcus sp. (strain CC9311), this protein is Peptidyl-tRNA hydrolase.